The chain runs to 526 residues: Cholesterol side-chain cleavage enzyme, mitochondrial (526 aa).

Residues 1–36 constitute a mitochondrion transit peptide; it reads MLAKGLSLRSVLVKGCQPFLSPTWQGPVLSTGKGAG. A compositionally biased stretch (low complexity) spans 30–41; sequence STGKGAGTSTSS. Positions 30-49 are disordered; sequence STGKGAGTSTSSPRSFNEIP. Residue cysteine 458 coordinates heme.

It belongs to the cytochrome P450 family. Interacts with FDX1/adrenodoxin. The cofactor is heme.

The protein localises to the mitochondrion inner membrane. It catalyses the reaction 6 reduced [adrenodoxin] + cholesterol + 3 O2 + 6 H(+) = 4-methylpentanal + pregnenolone + 6 oxidized [adrenodoxin] + 4 H2O. It carries out the reaction 2 reduced [adrenodoxin] + cholesterol + O2 + 2 H(+) = (22R)-hydroxycholesterol + 2 oxidized [adrenodoxin] + H2O. The catalysed reaction is (22R)-hydroxycholesterol + 2 reduced [adrenodoxin] + O2 + 2 H(+) = (20R,22R)-20,22-dihydroxycholesterol + 2 oxidized [adrenodoxin] + H2O. The enzyme catalyses (20R,22R)-20,22-dihydroxycholesterol + 2 reduced [adrenodoxin] + O2 + 2 H(+) = 4-methylpentanal + pregnenolone + 2 oxidized [adrenodoxin] + 2 H2O. The protein operates within lipid metabolism; C21-steroid hormone metabolism. It participates in steroid metabolism; cholesterol metabolism. In terms of biological role, a cytochrome P450 monooxygenase that catalyzes the side-chain hydroxylation and cleavage of cholesterol to pregnenolone, the precursor of most steroid hormones. Catalyzes three sequential oxidation reactions of cholesterol, namely the hydroxylation at C22 followed with the hydroxylation at C20 to yield 20R,22R-hydroxycholesterol that is further cleaved between C20 and C22 to yield the C21-steroid pregnenolone and 4-methylpentanal. Mechanistically, uses molecular oxygen inserting one oxygen atom into a substrate and reducing the second into a water molecule. Two electrons are provided by NADPH via a two-protein mitochondrial transfer system comprising flavoprotein FDXR (adrenodoxin/ferredoxin reductase) and nonheme iron-sulfur protein FDX1 or FDX2 (adrenodoxin/ferredoxin). The protein is Cholesterol side-chain cleavage enzyme, mitochondrial of Mus musculus (Mouse).